The following is a 113-amino-acid chain: Large ribosomal subunit protein uL22 (113 aa).

It belongs to the universal ribosomal protein uL22 family. Part of the 50S ribosomal subunit.

This protein binds specifically to 23S rRNA; its binding is stimulated by other ribosomal proteins, e.g. L4, L17, and L20. It is important during the early stages of 50S assembly. It makes multiple contacts with different domains of the 23S rRNA in the assembled 50S subunit and ribosome. Its function is as follows. The globular domain of the protein is located near the polypeptide exit tunnel on the outside of the subunit, while an extended beta-hairpin is found that lines the wall of the exit tunnel in the center of the 70S ribosome. This Xanthomonas axonopodis pv. citri (strain 306) protein is Large ribosomal subunit protein uL22.